A 284-amino-acid polypeptide reads, in one-letter code: SF-assemblin (284 aa).

A disordered region spans residues 1 to 30 (PTPSPEARVASRPFLDSPLPGSPRSGSPTG). The tract at residues 1-38 (PTPSPEARVASRPFLDSPLPGSPRSGSPTGYITATKAI) is nonhelical region. Residues 17–30 (SPLPGSPRSGSPTG) are compositionally biased toward low complexity. The rod stretch occupies residues 39–284 (SAGKLEHVAE…QDGLRIVNNS (246 aa)). Coiled coils occupy residues 56–102 (EIEL…QIQV) and 239–268 (LDEI…QAVN).

This sequence belongs to the SF-assemblin family. Post-translationally, consists of at least four isoforms including two phosphorylated.

The protein resides in the cytoplasm. The protein localises to the cytoskeleton. In terms of biological role, major component of the striated microtubule-associated fibers (SMAFs; system-I-fibers). The sequence is that of SF-assemblin from Spermatozopsis similis (Green alga).